The chain runs to 1323 residues: Traf2 and NCK-interacting protein kinase (1323 aa).

The Protein kinase domain maps to 25–289; that stretch reads FELVELVGNG…TEQLMKHPFI (265 aa). Residues 31-39 and lysine 54 contribute to the ATP site; that span reads VGNGTYGQV. Aspartate 153 (proton acceptor) is an active-site residue. Threonine 187 bears the Phosphothreonine mark. Disordered regions lie at residues 284–347, 397–559, and 571–838; these read MKHP…LPGE, EQKE…LRPV, and SQGP…NEQY. Residues 288–307 show a composition bias toward basic and acidic residues; it reads FIRDQPNERQVRIQLKDHID. Residues 290-1010 are mediates interaction with NEDD4; the sequence is RDQPNERQVR…EIRKYKKRFN (721 aa). Residues 317–335 show a composition bias toward acidic residues; sequence DETEYEYSGSEEEEEENDS. A phosphoserine mark is found at serine 324 and serine 326. Basic and acidic residues-rich tracts occupy residues 397–470, 477–494, and 503–513; these read EQKE…ERDY, QRQE…HYKE, and AWAKEVEERSR. Phosphoserine occurs at positions 531 and 541. Position 552 is a phosphothreonine (threonine 552). 4 positions are modified to phosphoserine: serine 571, serine 579, serine 581, and serine 611. Residues 623–640 are compositionally biased toward basic and acidic residues; sequence RIEKFDRSSWLRQEEDIP. Phosphoserine is present on residues serine 649, serine 651, serine 659, serine 672, serine 678, serine 691, serine 735, serine 737, and serine 740. Over residues 691–726 the composition is skewed to low complexity; that stretch reads SSLQRTSSGSSSSSSTPSSQPSSQGGSQPGSQAGSS. 2 stretches are compositionally biased toward basic and acidic residues: residues 746–760 and 772–790; these read EPSK…DITR and KELR…KKVT. A compositionally biased stretch (acidic residues) spans 797 to 810; sequence EESESSEEEEEDGE. At serine 922 the chain carries Phosphoserine. The interval 939 to 960 is disordered; it reads FVDPRVYQTSPTDEDEEDDESS. The span at 950–959 shows a compositional bias: acidic residues; the sequence is TDEDEEDDES. A CNH domain is found at 1010–1297; sequence NSEILCAALW…KFLCERNDKV (288 aa).

It belongs to the protein kinase superfamily. STE Ser/Thr protein kinase family. STE20 subfamily. As to quaternary structure, interacts (via the CNH domain) with RAP2A (GTP-bound form preferentially); the interaction is direct and required for the activation of TNIK by RAP2A. Interacts with NEDD4; recruits RAP2A to NEDD4. Interacts with TRAF2 and NCK. Interacts with TCF7L2/TCF4 and CTNNB1; the interaction is direct. Interacts with TANC1. Autophosphorylated. Autophosphorylation is activated by RAP2A and induces association to the cytoskeletal fraction.

The protein localises to the nucleus. It is found in the cytoplasm. It localises to the recycling endosome. Its subcellular location is the cytoskeleton. The catalysed reaction is L-seryl-[protein] + ATP = O-phospho-L-seryl-[protein] + ADP + H(+). It carries out the reaction L-threonyl-[protein] + ATP = O-phospho-L-threonyl-[protein] + ADP + H(+). Serine/threonine kinase that acts as an essential activator of the Wnt signaling pathway. Recruited to promoters of Wnt target genes and required to activate their expression. May act by phosphorylating TCF4/TCF7L2. Appears to act upstream of the JUN N-terminal pathway. May play a role in the response to environmental stress. Part of a signaling complex composed of NEDD4, RAP2A and TNIK which regulates neuronal dendrite extension and arborization during development. More generally, it may play a role in cytoskeletal rearrangements and regulate cell spreading. Phosphorylates SMAD1 on Thr-322. Activator of the Hippo signaling pathway which plays a pivotal role in organ size control and tumor suppression by restricting proliferation and promoting apoptosis. MAP4Ks act in parallel to and are partially redundant with STK3/MST2 and STK4/MST2 in the phosphorylation and activation of LATS1/2, and establish MAP4Ks as components of the expanded Hippo pathway. The protein is Traf2 and NCK-interacting protein kinase (Tnik) of Mus musculus (Mouse).